Consider the following 621-residue polypeptide: Probable potassium transport system protein Kup 2 (621 aa).

12 helical membrane passes run 12–32 (ITVA…LYAL), 52–72 (VLSL…VAII), 101–121 (WIIT…SMIT), 138–158 (PDLK…LFFI), 166–186 (VGKL…ILGL), 213–233 (GLAF…EALY), 249–269 (FGFV…LLLI), 286–306 (ALIP…QAVI), 338–358 (IYVP…VIGF), 370–390 (IAVT…MVLM), 396–416 (LLVA…FAAN), and 420–440 (IPEG…VLTT).

Belongs to the HAK/KUP transporter (TC 2.A.72) family.

The protein localises to the cell inner membrane. The enzyme catalyses K(+)(in) + H(+)(in) = K(+)(out) + H(+)(out). Transport of potassium into the cell. Likely operates as a K(+):H(+) symporter. The sequence is that of Probable potassium transport system protein Kup 2 from Dechloromonas aromatica (strain RCB).